The sequence spans 348 residues: Dihydroorotase (348 aa).

2 residues coordinate Zn(2+): H17 and H19. Substrate is bound by residues 19–21 (HLR) and N45. Zn(2+) contacts are provided by K103, H140, and H178. K103 carries the post-translational modification N6-carboxylysine. Residue H140 participates in substrate binding. L223 contributes to the substrate binding site. D251 lines the Zn(2+) pocket. D251 is a catalytic residue. Positions 255 and 267 each coordinate substrate.

The protein belongs to the metallo-dependent hydrolases superfamily. DHOase family. Class II DHOase subfamily. In terms of assembly, homodimer. The cofactor is Zn(2+).

The enzyme catalyses (S)-dihydroorotate + H2O = N-carbamoyl-L-aspartate + H(+). It participates in pyrimidine metabolism; UMP biosynthesis via de novo pathway; (S)-dihydroorotate from bicarbonate: step 3/3. Functionally, catalyzes the reversible cyclization of carbamoyl aspartate to dihydroorotate. The sequence is that of Dihydroorotase from Salmonella dublin (strain CT_02021853).